A 313-amino-acid polypeptide reads, in one-letter code: 3'-5' exoribonuclease YhaM (313 aa).

In terms of domain architecture, HD spans 163-279 (HVVSMLRLAK…LHQIDLMDAS (117 aa)).

This sequence belongs to the YhaM family.

Shows a 3'-5' exoribonuclease activity. The chain is 3'-5' exoribonuclease YhaM from Listeria monocytogenes serotype 4b (strain CLIP80459).